The chain runs to 153 residues: Transcriptional repressor NrdR (153 aa).

Residues 3–34 fold into a zinc finger; it reads CPFCNSTDTQVKDSRSIENDMLIRRRRVCLVC. The ATP-cone domain occupies 49 to 139; that stretch reads FMVVKKNGET…VYMNFRNIND (91 aa).

Belongs to the NrdR family. Requires Zn(2+) as cofactor.

Its function is as follows. Negatively regulates transcription of bacterial ribonucleotide reductase nrd genes and operons by binding to NrdR-boxes. The protein is Transcriptional repressor NrdR of Ehrlichia chaffeensis (strain ATCC CRL-10679 / Arkansas).